The sequence spans 226 residues: Urease accessory protein UreF (226 aa).

The protein belongs to the UreF family. As to quaternary structure, ureD, UreF and UreG form a complex that acts as a GTP-hydrolysis-dependent molecular chaperone, activating the urease apoprotein by helping to assemble the nickel containing metallocenter of UreC. The UreE protein probably delivers the nickel.

The protein resides in the cytoplasm. Its function is as follows. Required for maturation of urease via the functional incorporation of the urease nickel metallocenter. This is Urease accessory protein UreF from Burkholderia vietnamiensis (strain G4 / LMG 22486) (Burkholderia cepacia (strain R1808)).